The chain runs to 434 residues: Histidinol dehydrogenase (434 aa).

Positions 130, 192, and 215 each coordinate NAD(+). Ser-238, Gln-260, and His-263 together coordinate substrate. Residues Gln-260 and His-263 each contribute to the Zn(2+) site. Active-site proton acceptor residues include Glu-328 and His-329. Residues His-329, Asp-362, Glu-416, and His-421 each coordinate substrate. Position 362 (Asp-362) interacts with Zn(2+). His-421 is a Zn(2+) binding site.

It belongs to the histidinol dehydrogenase family. The cofactor is Zn(2+).

The enzyme catalyses L-histidinol + 2 NAD(+) + H2O = L-histidine + 2 NADH + 3 H(+). Its pathway is amino-acid biosynthesis; L-histidine biosynthesis; L-histidine from 5-phospho-alpha-D-ribose 1-diphosphate: step 9/9. Functionally, catalyzes the sequential NAD-dependent oxidations of L-histidinol to L-histidinaldehyde and then to L-histidine. The chain is Histidinol dehydrogenase from Synechococcus sp. (strain ATCC 27144 / PCC 6301 / SAUG 1402/1) (Anacystis nidulans).